A 182-amino-acid polypeptide reads, in one-letter code: ADP-ribosylation factor-like protein 3 (182 aa).

G2 is lipidated: N-myristoyl glycine. S5 carries the phosphoserine modification. Residues 24 to 31 (GLDNAGKT), T48, 67 to 71 (DIGGQ), G70, 126 to 129 (NKQD), and 159 to 161 (SAL) each bind GTP. Residues T31 and T48 each coordinate Mg(2+).

It belongs to the small GTPase superfamily. Arf family. Found in a complex with ARL3, RP2 and UNC119 (or UNC119B); RP2 induces hydrolysis of GTP ARL3 in the complex, leading to the release of UNC119 (or UNC119B). Interacts with RP2; interaction is direct and stimulated with the activated GTP-bound form of ARL3. Interacts with SYS1. Interacts with ARL2BP; the GTP-bound form interacts with ARL2BP. Microtubule-associated protein. Does not interact with TBCC. Interacts with RP2. Interacts with PDE6D; the interaction occurs specifically with the GTP-bound form of ARL3. Interacts with GGA1; the interaction recruits PKD1:PKD2 complex to trans-Golgi network and is required for ciliary targeting of PKD1:PKD2 complex. Interacts with DNAAF9.

Its subcellular location is the golgi apparatus membrane. It is found in the cytoplasm. The protein localises to the cytoskeleton. The protein resides in the spindle. It localises to the nucleus. Its subcellular location is the microtubule organizing center. It is found in the centrosome. The protein localises to the cell projection. The protein resides in the cilium. In terms of biological role, small GTP-binding protein which cycles between an inactive GDP-bound and an active GTP-bound form, and the rate of cycling is regulated by guanine nucleotide exchange factors (GEF) and GTPase-activating proteins (GAP). Required for normal cytokinesis and cilia signaling. Required for targeting proteins to the cilium, including myristoylated NPHP3 and prenylated INPP5E. Targets NPHP3 to the ciliary membrane by releasing myristoylated NPHP3 from UNC119B cargo adapter into the cilium. Requires assistance from GTPase-activating proteins (GAPs) like RP2 and PDE6D, in order to cycle between inactive GDP-bound and active GTP-bound forms. Required for PKD1:PKD2 complex targeting from the trans-Golgi network to the cilium. The polypeptide is ADP-ribosylation factor-like protein 3 (Mus musculus (Mouse)).